Here is a 388-residue protein sequence, read N- to C-terminus: Chorismate synthase (388 aa).

Residues Arg39 and Arg45 each contribute to the NADP(+) site. FMN-binding positions include 130–132 (RSS), 251–252 (NA), Gly296, 311–315 (KPIPT), and Arg337.

It belongs to the chorismate synthase family. Homotetramer. Requires FMNH2 as cofactor.

It carries out the reaction 5-O-(1-carboxyvinyl)-3-phosphoshikimate = chorismate + phosphate. The protein operates within metabolic intermediate biosynthesis; chorismate biosynthesis; chorismate from D-erythrose 4-phosphate and phosphoenolpyruvate: step 7/7. Its function is as follows. Catalyzes the anti-1,4-elimination of the C-3 phosphate and the C-6 proR hydrogen from 5-enolpyruvylshikimate-3-phosphate (EPSP) to yield chorismate, which is the branch point compound that serves as the starting substrate for the three terminal pathways of aromatic amino acid biosynthesis. This reaction introduces a second double bond into the aromatic ring system. This Geobacillus thermodenitrificans (strain NG80-2) protein is Chorismate synthase.